The chain runs to 452 residues: Keratin, type I cytoskeletal 15 (452 aa).

The interval 1-97 (MATTFLQTSS…GGDGGLLSGN (97 aa)) is head. Phosphoserine is present on residues S15, S16, S28, S33, and S47. Residues 98–133 (EKVTMQNLNDRLASYLDKVRALEQANTELEVKIRDW) are coil 1A. The 313-residue stretch at 98 to 410 (EKVTMQNLND…NLLEGQDAKM (313 aa)) folds into the IF rod domain. The residue at position 124 (T124) is a Phosphothreonine. Residues 134 to 152 (YQKQSPASPDRDYSHYFKT) are linker 1. The coil 1B stretch occupies residues 153–244 (MEEIRDKILA…KNHEEEMKEF (92 aa)). A linker 12 region spans residues 245 to 264 (SSQLAGQVNVEMDAAPGVDL). The coil 2 stretch occupies residues 265–406 (TRMLAEMREQ…ATYRNLLEGQ (142 aa)). Residue K293 forms a Glycyl lysine isopeptide (Lys-Gly) (interchain with G-Cter in SUMO2) linkage. A phosphothreonine mark is found at T294 and T316. Residues 407 to 452 (DAKMAGIGVREGSSGGGGSSSSSSNFHISVEESVDGKVVSSRKREI) are tail. The interval 413–452 (IGVREGSSGGGGSSSSSSNFHISVEESVDGKVVSSRKREI) is disordered. Residue K443 forms a Glycyl lysine isopeptide (Lys-Gly) (interchain with G-Cter in SUMO1); alternate linkage. K443 is covalently cross-linked (Glycyl lysine isopeptide (Lys-Gly) (interchain with G-Cter in SUMO2); alternate).

Belongs to the intermediate filament family. In terms of assembly, heterotetramer of two type I and two type II keratins. Forms a heterodimer with KRT14. Interacts with PLEC isoform 1C, when in a heterodimer with KRT14. Interacts with NOD2. As to expression, expressed strongly in the basal cell layer at the tips of rete-like prominences (RLPs) of adult dorsal tongue, outer root sheath (ORS) of hair follicle and skin epidermis (at protein level).

Its function is as follows. In the absence of KRT14, makes a bona fide, but ultrastructurally distinct keratin filament network with KRT5. The protein is Keratin, type I cytoskeletal 15 (Krt15) of Mus musculus (Mouse).